The following is a 102-amino-acid chain: Large ribosomal subunit protein uL24 (102 aa).

It belongs to the universal ribosomal protein uL24 family. As to quaternary structure, part of the 50S ribosomal subunit.

Functionally, one of two assembly initiator proteins, it binds directly to the 5'-end of the 23S rRNA, where it nucleates assembly of the 50S subunit. Its function is as follows. One of the proteins that surrounds the polypeptide exit tunnel on the outside of the subunit. The chain is Large ribosomal subunit protein uL24 from Rhizobium leguminosarum bv. trifolii (strain WSM2304).